Consider the following 390-residue polypeptide: S-adenosylmethionine synthase 4 (390 aa).

Glu-9 contacts Mg(2+). Residue His-15 coordinates ATP. Glu-43 lines the K(+) pocket. Glu-56 and Gln-99 together coordinate L-methionine. ATP contacts are provided by residues 167 to 169, 235 to 238, Asp-246, 252 to 253, Ala-269, Lys-273, and Lys-277; these read DGK, SGRF, and RK. Asp-246 serves as a coordination point for L-methionine. Lys-277 provides a ligand contact to L-methionine.

This sequence belongs to the AdoMet synthase family. In terms of assembly, homotetramer. The cofactor is Mn(2+). Requires Mg(2+) as cofactor. It depends on Co(2+) as a cofactor. K(+) serves as cofactor.

Its subcellular location is the cytoplasm. It catalyses the reaction L-methionine + ATP + H2O = S-adenosyl-L-methionine + phosphate + diphosphate. It participates in amino-acid biosynthesis; S-adenosyl-L-methionine biosynthesis; S-adenosyl-L-methionine from L-methionine: step 1/1. Its function is as follows. Catalyzes the formation of S-adenosylmethionine from methionine and ATP. The reaction comprises two steps that are both catalyzed by the same enzyme: formation of S-adenosylmethionine (AdoMet) and triphosphate, and subsequent hydrolysis of the triphosphate. The polypeptide is S-adenosylmethionine synthase 4 (METK4) (Populus trichocarpa (Western balsam poplar)).